A 66-amino-acid polypeptide reads, in one-letter code: Small ribosomal subunit protein bS21 (66 aa).

It belongs to the bacterial ribosomal protein bS21 family.

This chain is Small ribosomal subunit protein bS21, found in Rickettsia felis (strain ATCC VR-1525 / URRWXCal2) (Rickettsia azadi).